The chain runs to 217 residues: Putative peroxiredoxin Q, chloroplastic (217 aa).

A chloroplast-targeting transit peptide spans 1-66 (MAFAVSTACR…PSTTGRNRIV (66 aa)). Residues 70–217 (VSKGSAAPNF…GETLKILQSL (148 aa)) enclose the Thioredoxin domain. The active-site Cysteine sulfenic acid (-SOH) intermediate is the Cys112. The cysteines at positions 112 and 117 are disulfide-linked.

The protein belongs to the peroxiredoxin family. BCP/PrxQ subfamily. In terms of assembly, monomer.

It is found in the plastid. The protein localises to the chloroplast thylakoid lumen. The catalysed reaction is a hydroperoxide + [thioredoxin]-dithiol = an alcohol + [thioredoxin]-disulfide + H2O. Thiol-specific peroxidase that catalyzes the reduction of hydrogen peroxide and organic hydroperoxides to water and alcohols, respectively. Plays a role in cell protection against oxidative stress by detoxifying peroxides. The polypeptide is Putative peroxiredoxin Q, chloroplastic (Oryza sativa subsp. indica (Rice)).